The sequence spans 781 residues: Transcription factor Sp3 (781 aa).

Over residues 1–12 (MTAPEKPVKQEE) the composition is skewed to basic and acidic residues. Disordered stretches follow at residues 1 to 53 (MTAP…AAQD) and 65 to 88 (TCSK…AGAP). Residues 20–31 (SGGGGGGGGGHG) show a composition bias toward gly residues. A compositionally biased stretch (low complexity) spans 32–53 (EYLQQQQQHGNGAVAAAAAAQD). The residue at position 73 (S73) is a Phosphoserine. K120 participates in a covalent cross-link: Glycyl lysine isopeptide (Lys-Gly) (interchain with G-Cter in SUMO). A transactivation domain (Gln-rich) region spans residues 138–237 (QYVLPLQNLQ…IPQTGQVQVQ (100 aa)). Residues 301–338 (QAMDSSDNSERTGERVSPDINETNTDTDLFVPTSSSSQ) form a disordered region. Residues 308 to 317 (NSERTGERVS) are compositionally biased toward basic and acidic residues. The span at 320–338 (INETNTDTDLFVPTSSSSQ) shows a compositional bias: polar residues. The tract at residues 350-499 (QQNTNSLTTS…TPVQTLTLGQ (150 aa)) is transactivation domain (Gln-rich). The 9aaTAD signature appears at 461 to 469 (VTWQTFQVQ). The repressor domain stretch occupies residues 534–620 (IQLHPGENAD…RGTNLGKKKQ (87 aa)). K551 is modified (N6-acetyllysine; alternate). K551 participates in a covalent cross-link: Glycyl lysine isopeptide (Lys-Gly) (interchain with G-Cter in SUMO); alternate. K551 participates in a covalent cross-link: Glycyl lysine isopeptide (Lys-Gly) (interchain with G-Cter in SUMO1); alternate. K551 is covalently cross-linked (Glycyl lysine isopeptide (Lys-Gly) (interchain with G-Cter in SUMO2); alternate). Residues S563 and S566 each carry the phosphoserine modification. K593 is covalently cross-linked (Glycyl lysine isopeptide (Lys-Gly) (interchain with G-Cter in SUMO2)). The C2H2-type 1 zinc finger occupies 621 to 645 (HICHIPGCGKVYGKTSHLRAHLRWH). Residue S646 is modified to Phosphoserine. 2 consecutive C2H2-type zinc fingers follow at residues 651–675 (FVCN…RRTH) and 681–703 (FVCP…IKTH).

This sequence belongs to the Sp1 C2H2-type zinc-finger protein family. Interacts with HLTF; the interaction may be required for basal transcriptional activity of HLTF. Interacts with HDAC1; the interaction deacetylates SP3 and regulates its transcriptional activity. Interacts with HDAC2 (preferably the CK2-phosphorylated form); the interaction deacetylates SP3 and regulates its transcriptional activity. Interacts with MEIS2 isoform 4 and PBX1 isoform PBX1a. Post-translationally, not glycosylated. In terms of processing, acetylated by histone acetyltransferase p300, deacetylated by HDACs. Acetylation/deacetylation states regulate transcriptional activity. Acetylation appears to activate transcription. Alternate sumoylation and acetylation at Lys-551 also control transcriptional activity. Ceramides can also regulate acetylation/deacetylation events through altering the interaction of HDAC with SP3. In vitro, C(18)-ceramides, but not C(16)-ceramides, increase the interaction of HDAC1 with SP3 and enhance the deacetylation of SP3 and the subsequent repression of the TERT promoter. Sumoylated on all isoforms. Sumoylated on 2 sites in longer isoforms with Lys-551 being the major site. Sumoylation at this site promotes nuclear localization to the nuclear periphery, nuclear dots and PML nuclear bodies. Sumoylation on Lys-551 represses the transactivation activity, except for the largest isoform, L-Sp3, which has little effect on transactivation. Alternate sumoylation and acetylation at Lys-551 also control transcriptional activity. In terms of tissue distribution, ubiquitously expressed.

It localises to the nucleus. It is found in the PML body. Transcriptional factor that can act as an activator or repressor depending on isoform and/or post-translational modifications. Binds to GT and GC boxes promoter elements. Competes with SP1 for the GC-box promoters. Weak activator of transcription but can activate a number of genes involved in different processes such as cell-cycle regulation, hormone-induction and house-keeping. In Homo sapiens (Human), this protein is Transcription factor Sp3 (SP3).